The sequence spans 182 residues: MRVLKYAILGLLRKGELSGYDITSYFKEELGQFWSAKHSQIYPELKKLTDEGFITFRTTIQGTKLEKKMYTLTDSGKQELHDWLIRHQPIPETVKDEFMLKAYFISCLSRQEASDLFKDQLQKRQAKLSDLQGSYEKLMASAEPMSFSSPDFGHYLVLTKALEREKNYVSWLESILAMIDKD.

This sequence belongs to the PadR family. As to quaternary structure, homodimer.

It localises to the cytoplasm. PadR repressor activity is inhibited in the presence of phenolic acids, which directly modulate PadR binding to the promoter of padC, leading to the dissociation of PadR from the operator DNA and expression of padC. In the presence of MgCl(2), binding is not altered by phenolic acids. Transcriptional regulator involved in the regulation of the metabolism of phenolic acids. In the absence of phenolic acids, represses the expression of padC, which encodes a phenolic acid decarboxylase (PAD) involved in the detoxification of harmful phenolic acids. Acts by binding to the padC promoter region, preventing the transcription of the gene. This Bacillus subtilis (strain 168) protein is Negative transcriptional regulator PadR.